Here is a 185-residue protein sequence, read N- to C-terminus: Ribosome-recycling factor (185 aa).

It belongs to the RRF family.

Its subcellular location is the cytoplasm. Functionally, responsible for the release of ribosomes from messenger RNA at the termination of protein biosynthesis. May increase the efficiency of translation by recycling ribosomes from one round of translation to another. The sequence is that of Ribosome-recycling factor from Vibrio parahaemolyticus serotype O3:K6 (strain RIMD 2210633).